Consider the following 744-residue polypeptide: Dolasta-1(15),8-diene synthase (744 aa).

A terpene cyclase region spans residues 1–344 (MASTMMNYQD…RRYNPAAPLP (344 aa)). Mg(2+) contacts are provided by Asp-108 and Asp-112. Substrate is bound by residues Asp-108, Asp-112, 198-201 (RHYD), 246-250 (SWDKE), and 336-337 (RY). Residues 108 to 112 (DDLTD) carry the DDXXD motif. A prenyltransferase region spans residues 345-744 (RREDIGKVNG…LHLITFQLKV (400 aa)). A disordered region spans residues 399 to 422 (YTTMTPAETSSDDKKKKAKASHET). A compositionally biased stretch (basic and acidic residues) spans 409–422 (SDDKKKKAKASHET). The isopentenyl diphosphate site is built by Arg-459 and His-488. The Mg(2+) site is built by Asp-495 and Asp-499. Positions 495–499 (DDVQD) match the DDXXD motif. Arg-504 provides a ligand contact to dimethylallyl diphosphate. Arg-505 is an isopentenyl diphosphate binding site. Dimethylallyl diphosphate contacts are provided by Lys-581, Thr-582, and Gln-617.

The protein in the N-terminal section; belongs to the terpene synthase family. This sequence in the C-terminal section; belongs to the FPP/GGPP synthase family. Hexamer. It depends on Mg(2+) as a cofactor.

It catalyses the reaction isopentenyl diphosphate + (2E,6E)-farnesyl diphosphate = (2E,6E,10E)-geranylgeranyl diphosphate + diphosphate. It carries out the reaction (2E,6E,10E)-geranylgeranyl diphosphate = (5R,12R,14S)-dolasta-1(15),8-diene + diphosphate. The catalysed reaction is (2E,6E,10E)-geranylgeranyl diphosphate = delta-araneosene + diphosphate. Bifunctional terpene synthase involved in the biosynthesis of the diterpenes delta-araneosene and dolasta-1(15),8-diene. The C-terminal prenyltransferase domain of CgDS catalyzes formation of the universal precursor of diterpene, geranylgeranyl diphosphate (GGPP), whereas the N-terminal terpene cyclase domain catalyzes the cyclization of GGPP to the intermediate delta-araneosene that is further converted to dolasta-1(15),8-diene in a second cyclization event. In some cases the cyclization stops at the delta-araneosene stage. This is Dolasta-1(15),8-diene synthase from Colletotrichum gloeosporioides (Anthracnose fungus).